The primary structure comprises 2278 residues: Protein Ycf2 (2278 aa).

The protein belongs to the Ycf2 family.

Its subcellular location is the plastid. It localises to the chloroplast stroma. The protein resides in the chromoplast stroma. Probable ATPase of unknown function. Its presence in a non-photosynthetic plant (Epifagus virginiana) and experiments in tobacco indicate that it has an essential function which is probably not related to photosynthesis. This is Protein Ycf2 (ycf2-A) from Solanum lycopersicum (Tomato).